The chain runs to 93 residues: U12-lycotoxin-Ls1b (93 aa).

The N-terminal stretch at Met-1 to Ser-18 is a signal peptide. The propeptide occupies Glu-19–Arg-38.

The protein belongs to the neurotoxin 31 family. Post-translationally, contains 5 disulfide bonds. In terms of tissue distribution, expressed by the venom gland.

It is found in the secreted. The protein is U12-lycotoxin-Ls1b of Lycosa singoriensis (Wolf spider).